The following is a 128-amino-acid chain: MGKGNAKNSGGGDKKSKAKAGDAKDDSKGKMKGAQSVNVRHILCEKFSKKEEALEKIRNGAKFDEVAREYSEDKARQGGSLGWKSKGELELPFEEVAFSLEQSTTGNPKIGEAKTGYGYHIIMVEGRK.

The segment at Met-1 to Gln-35 is disordered. Residues Gly-12–Gly-29 are compositionally biased toward basic and acidic residues. In terms of domain architecture, PpiC spans Ala-34 to Gly-126.

Belongs to the PpiC/parvulin rotamase family. PIN4 subfamily.

It catalyses the reaction [protein]-peptidylproline (omega=180) = [protein]-peptidylproline (omega=0). In terms of biological role, PPIases accelerate the folding of proteins. It catalyzes the cis-trans isomerization of proline imidic peptide bonds in oligopeptides. This Emericella nidulans (strain FGSC A4 / ATCC 38163 / CBS 112.46 / NRRL 194 / M139) (Aspergillus nidulans) protein is Peptidyl-prolyl cis-trans isomerase pin4 (pin4).